We begin with the raw amino-acid sequence, 646 residues long: Mitochondrial distribution and morphology protein 10 (646 aa).

2 disordered regions span residues 206–230 and 315–347; these read KSTS…SLSN and ETSS…GGGL. A compositionally biased stretch (low complexity) spans 207 to 230; that stretch reads STSSSMDRLDSSNPSLSSSTSLSN. The segment covering 315 to 333 has biased composition (polar residues); it reads ETSSSASYPQRNGSVLHTG.

Belongs to the MDM10 family. In terms of assembly, component of the ER-mitochondria encounter structure (ERMES) or MDM complex, composed of MMM1, MDM10, MDM12 and MDM34. Associates with the mitochondrial outer membrane sorting assembly machinery SAM(core) complex.

The protein resides in the mitochondrion outer membrane. In terms of biological role, component of the ERMES/MDM complex, which serves as a molecular tether to connect the endoplasmic reticulum and mitochondria. Components of this complex are involved in the control of mitochondrial shape and protein biogenesis and may function in phospholipid exchange. MDM10 is involved in the late assembly steps of the general translocase of the mitochondrial outer membrane (TOM complex). Functions in the TOM40-specific route of the assembly of outer membrane beta-barrel proteins, including the association of TOM40 with the receptor TOM22 and small TOM proteins. Can associate with the SAM(core) complex as well as the MDM12-MMM1 complex, both involved in late steps of the major beta-barrel assembly pathway, that is responsible for biogenesis of all outer membrane beta-barrel proteins. May act as a switch that shuttles between both complexes and channels precursor proteins into the TOM40-specific pathway. Plays a role in mitochondrial morphology and in the inheritance of mitochondria. This chain is Mitochondrial distribution and morphology protein 10, found in Mycosarcoma maydis (Corn smut fungus).